An 84-amino-acid polypeptide reads, in one-letter code: RNA-binding protein Hfq (84 aa).

In terms of domain architecture, Sm spans 9–68 (DPYLNTLRKERVPVSIYLVNGIKLQGQIESFDQFVILLKNTVSQMVYKHAISTVVPGRPV).

This sequence belongs to the Hfq family. In terms of assembly, homohexamer.

In terms of biological role, RNA chaperone that binds small regulatory RNA (sRNAs) and mRNAs to facilitate mRNA translational regulation in response to envelope stress, environmental stress and changes in metabolite concentrations. Also binds with high specificity to tRNAs. This is RNA-binding protein Hfq from Stutzerimonas stutzeri (strain A1501) (Pseudomonas stutzeri).